Here is a 385-residue protein sequence, read N- to C-terminus: Eukaryotic translation initiation factor 3 subunit M (385 aa).

The PCI domain occupies N180–H342.

This sequence belongs to the eIF-3 subunit M family. Component of the eukaryotic translation initiation factor 3 (eIF-3) complex.

The protein resides in the cytoplasm. Its function is as follows. Component of the eukaryotic translation initiation factor 3 (eIF-3) complex, which is involved in protein synthesis of a specialized repertoire of mRNAs and, together with other initiation factors, stimulates binding of mRNA and methionyl-tRNAi to the 40S ribosome. The eIF-3 complex specifically targets and initiates translation of a subset of mRNAs involved in cell proliferation. The protein is Eukaryotic translation initiation factor 3 subunit M of Anopheles gambiae (African malaria mosquito).